Here is a 673-residue protein sequence, read N- to C-terminus: L-type lectin-domain containing receptor kinase SIT2 (673 aa).

Residues 1 to 27 (MVLPKPEMPFFVLLLFLGLGCLRPAAA) form the signal peptide. The Extracellular segment spans residues 28-296 (TDERFVFNGF…FPKPRSKTLE (269 aa)). The segment at 32-270 (FVFNGFTGAN…VLGWSFKMNG (239 aa)) is legume-lectin like. N-linked (GlcNAc...) asparagine glycans are attached at residues asparagine 41, asparagine 60, asparagine 82, asparagine 118, asparagine 138, asparagine 191, asparagine 214, asparagine 235, and asparagine 276. A helical membrane pass occupies residues 297–317 (IVLPIASAVLVFAVAAAVFVF). Topologically, residues 318-673 (MRRRRMFSEL…GTFSDLSGGR (356 aa)) are cytoplasmic. In terms of domain architecture, Protein kinase spans 352–631 (FSDKRLLGIG…LEGDVPLPEL (280 aa)). Residues 358–366 (LGIGGFGRV) and lysine 381 contribute to the ATP site. Aspartate 477 acts as the Proton acceptor in catalysis.

The protein in the C-terminal section; belongs to the protein kinase superfamily. Ser/Thr protein kinase family. In the N-terminal section; belongs to the leguminous lectin family. Mainly expressed in root epidermal cells.

Its subcellular location is the cell membrane. The enzyme catalyses L-seryl-[protein] + ATP = O-phospho-L-seryl-[protein] + ADP + H(+). The catalysed reaction is L-threonyl-[protein] + ATP = O-phospho-L-threonyl-[protein] + ADP + H(+). In terms of biological role, lectin-domain containing receptor kinase involved in salt stress response. Acts as a negative regulator of salt tolerance. The polypeptide is L-type lectin-domain containing receptor kinase SIT2 (Oryza sativa subsp. japonica (Rice)).